Here is a 42-residue protein sequence, read N- to C-terminus: Photosystem I reaction center subunit IX (42 aa).

A helical transmembrane segment spans residues 7–27; sequence YLSTAPVLSALWFAILAGLLI.

Belongs to the PsaJ family.

It localises to the plastid. It is found in the chloroplast thylakoid membrane. Its function is as follows. May help in the organization of the PsaE and PsaF subunits. The polypeptide is Photosystem I reaction center subunit IX (Chlorokybus atmophyticus (Soil alga)).